The primary structure comprises 243 residues: Thaumatin-like protein 1 (243 aa).

Positions 1 to 22 (MMKTLALYGLTLALFFLSGAHS) are cleaved as a signal peptide. Intrachain disulfides connect Cys-31–Cys-242, Cys-79–Cys-88, Cys-93–Cys-100, Cys-148–Cys-231, Cys-153–Cys-214, Cys-161–Cys-177, Cys-181–Cys-190, and Cys-191–Cys-201.

It belongs to the thaumatin family.

The protein localises to the secreted. The protein resides in the extracellular space. It localises to the apoplast. Possesses antifungal activity. This chain is Thaumatin-like protein 1 (TL1), found in Castanea sativa (Sweet chestnut).